The primary structure comprises 150 residues: Plasmin C (150 aa).

The first 14 residues, 1–14 (MRSFFLLCALVAVC), serve as a signal peptide directing secretion.

The chain is Plasmin C (PLSC) from Physarum polycephalum (Slime mold).